The sequence spans 196 residues: MEELPATAVGLKVNDGIVLASERRLSYGGYVLSKQAKKVYKINKFLMAGAGIYGDLQTLTRIMNVEIKYYEVSTGKPISVHAAAKLLSVILYQYKVMPFISEILFGGVDEKGPQLYVLDPIGSLIEDNYAAVGSGARIAIGVLESEYDPNMSLDVATQLITKAIKASIERDITSGDGIDLAIIDKKGNYENKFIPY.

A propeptide spans 1–6 (MEELPA) (removed in mature form; by autocatalysis). The active-site Nucleophile is Thr7.

Belongs to the peptidase T1B family. In terms of assembly, the 20S proteasome core is composed of 14 alpha and 14 beta subunits that assemble into four stacked heptameric rings, resulting in a barrel-shaped structure. The two inner rings, each composed of seven catalytic beta subunits, are sandwiched by two outer rings, each composed of seven alpha subunits. The catalytic chamber with the active sites is on the inside of the barrel. Has a gated structure, the ends of the cylinder being occluded by the N-termini of the alpha-subunits. Is capped at one or both ends by the proteasome regulatory ATPase, PAN.

Its subcellular location is the cytoplasm. The catalysed reaction is Cleavage of peptide bonds with very broad specificity.. With respect to regulation, the formation of the proteasomal ATPase PAN-20S proteasome complex, via the docking of the C-termini of PAN into the intersubunit pockets in the alpha-rings, triggers opening of the gate for substrate entry. Interconversion between the open-gate and close-gate conformations leads to a dynamic regulation of the 20S proteasome proteolysis activity. Functionally, component of the proteasome core, a large protease complex with broad specificity involved in protein degradation. This is Proteasome subunit beta 1 from Saccharolobus solfataricus (strain ATCC 35092 / DSM 1617 / JCM 11322 / P2) (Sulfolobus solfataricus).